The chain runs to 380 residues: Protein neprosin (380 aa).

An N-terminal signal peptide occupies residues 1–24 (MQAKFFTFVILSSVFYFNYPLAEA). Positions 25 to 128 (RSIQARLANK…QFPNLKFAPP (104 aa)) are cleaved as a propeptide — activation peptide. A disulfide bridge connects residues Cys52 and Cys98. Asn68, Asn145, and Asn152 each carry an N-linked (GlcNAc...) asparagine glycan. Residues 129-380 (SANTNHQYAV…YLFYGGPGCQ (252 aa)) form the Neprosin PEP catalytic domain. Glu188 is a catalytic residue. An intrachain disulfide couples Cys219 to Cys224. Residue Asn253 is glycosylated (N-linked (GlcNAc...) asparagine). Residue Glu297 is part of the active site. A disulfide bond links Cys358 and Cys379.

It belongs to the peptidase G3 family.

The protein localises to the secreted. The catalysed reaction is Hydrolysis of Pro-|-Xaa &gt;&gt; Ala-|-Xaa in oligopeptides.. Its activity is regulated as follows. Weakly inhibited by the aspartic protease inhibitor pepstatin. Weakly inhibited by pepstatin A (IC(50) of 140 uM) and 1,2-epoxy-3-(p-nitrophenoxy)propane (EPNP) (IC(50) of 480 uM). Activity is not affected by the POP inhibitor Z-Pro-prolinal inhibitor or the denaturant urea. Its function is as follows. Glutamic endopeptidase that preferentially cleaves peptide bonds on the C-terminal side of proline residues. Also cleaves peptide bonds on the C-terminal side of alanine residues but with less efficiency. In contrast to most proline-cleaving enzymes, effectively degrades proteins of any size. Found in the viscoelastic fluid of the pitcher, and so likely functions in the digestion of their prey. This Nepenthes x ventrata (Red tropical pitcher plant) protein is Protein neprosin.